Here is a 481-residue protein sequence, read N- to C-terminus: MAKEALIVKTTPLPQSRISFELEIPSETCKTCVNETISTISRSAKIPGFRLGKIPKQVLIQRIGITQLHASALEKIIDKSWQEALKIKSIEPLSEPELVDGFESLLAKFSPEKSLKFTLQTDVAPELKLKKSKGLSVEISKTKFDPKSVDEALEKSRSQFANIIPVTNRAAKLGDIAVVSFKGKYKDSGKEIDGGTSESMDLELEKNKMIPGFVEGIVKMKIGDTKTLNLKFPEDYSHEDSRGKEAIFEVSLKDLKEKELPELNDDFAKQSGNKESLKELKKDIEKQLKENFEKTQKDIKIEALLDALTNELVAEIPKSMIDIEVRNNIEQTAQRFAQQGLDVKSTFTPELVKSLSESTRPQAEKNVQRNLALKALAEKENITVEKDEIDLKMKDYEDAISQSSKQIDIKKLTEVISKDLLKEKLIIWLEENSEVKEKTTKASQASKTTKAKKTTTKTTKATKTATKTTKATKTQNKKEKK.

The region spanning 174 to 261 (GDIAVVSFKG…LKDLKEKELP (88 aa)) is the PPIase FKBP-type domain. Residues 435-481 (VKEKTTKASQASKTTKAKKTTTKTTKATKTATKTTKATKTQNKKEKK) form a disordered region. Over residues 456–474 (TKTTKATKTATKTTKATKT) the composition is skewed to low complexity.

It belongs to the FKBP-type PPIase family. Tig subfamily.

The protein localises to the cytoplasm. It carries out the reaction [protein]-peptidylproline (omega=180) = [protein]-peptidylproline (omega=0). Functionally, involved in protein export. Acts as a chaperone by maintaining the newly synthesized protein in an open conformation. Functions as a peptidyl-prolyl cis-trans isomerase. This chain is Trigger factor, found in Prochlorococcus marinus (strain MIT 9312).